Consider the following 178-residue polypeptide: Large ribosomal subunit protein uL10 (178 aa).

Belongs to the universal ribosomal protein uL10 family. In terms of assembly, part of the ribosomal stalk of the 50S ribosomal subunit. The N-terminus interacts with L11 and the large rRNA to form the base of the stalk. The C-terminus forms an elongated spine to which L12 dimers bind in a sequential fashion forming a multimeric L10(L12)X complex.

Its function is as follows. Forms part of the ribosomal stalk, playing a central role in the interaction of the ribosome with GTP-bound translation factors. This chain is Large ribosomal subunit protein uL10, found in Salinibacter ruber (strain DSM 13855 / M31).